A 460-amino-acid polypeptide reads, in one-letter code: Probable amino acid transporter skat-1 (460 aa).

10 consecutive transmembrane segments (helical) span residues 64–84 (LGGL…NWYG), 132–152 (FVNV…ILFI), 172–192 (MILM…FTEM), 194–214 (IVSF…AVIM), 236–256 (TITM…ILPI), 270–290 (FGVL…LGFF), 316–336 (VNVF…YVVY), 362–382 (GFRV…PKLE), 383–403 (IMIP…FPPF), and 426–446 (IFIN…GVYT).

The protein belongs to the amino acid/polyamine transporter 2 family. As to expression, expressed in the head, tail, body and ventral nerve cord neurons, muscles of the vulva, and intestine.

The protein resides in the membrane. Its subcellular location is the cytoplasmic granule. In terms of biological role, plays a role in the accumulation of vital dyes and endogenous fluorescent compounds in lysosome related organelles. Has an effect on lysosome related organelle (LRO) function, in a pathway with serotonin. The chain is Probable amino acid transporter skat-1 from Caenorhabditis elegans.